Consider the following 680-residue polypeptide: DNA ligase 1 (680 aa).

NAD(+) contacts are provided by residues 35-39 (DAEYD), 84-85 (SL), and aspartate 115. Catalysis depends on lysine 117, which acts as the N6-AMP-lysine intermediate. NAD(+) is bound by residues arginine 138, glutamate 175, lysine 295, and lysine 319. Positions 413, 416, 431, and 436 each coordinate Zn(2+). One can recognise a BRCT domain in the interval 599 to 680 (REGSQLQGLK…FANLLKGLDR (82 aa)).

Belongs to the NAD-dependent DNA ligase family. LigA subfamily. Requires Mg(2+) as cofactor. The cofactor is Mn(2+).

It carries out the reaction NAD(+) + (deoxyribonucleotide)n-3'-hydroxyl + 5'-phospho-(deoxyribonucleotide)m = (deoxyribonucleotide)n+m + AMP + beta-nicotinamide D-nucleotide.. DNA ligase that catalyzes the formation of phosphodiester linkages between 5'-phosphoryl and 3'-hydroxyl groups in double-stranded DNA using NAD as a coenzyme and as the energy source for the reaction. It is essential for DNA replication and repair of damaged DNA. The sequence is that of DNA ligase 1 from Nitratidesulfovibrio vulgaris (strain DP4) (Desulfovibrio vulgaris).